The chain runs to 271 residues: 4-hydroxy-tetrahydrodipicolinate reductase (271 aa).

Residues 10-15 (GAGGRM), E36, 100-102 (GTT), and 124-127 (SGNM) contribute to the NAD(+) site. H157 serves as the catalytic Proton donor/acceptor. H158 provides a ligand contact to (S)-2,3,4,5-tetrahydrodipicolinate. The Proton donor role is filled by K161. Residue 167–168 (GT) participates in (S)-2,3,4,5-tetrahydrodipicolinate binding.

The protein belongs to the DapB family.

It is found in the cytoplasm. The catalysed reaction is (S)-2,3,4,5-tetrahydrodipicolinate + NAD(+) + H2O = (2S,4S)-4-hydroxy-2,3,4,5-tetrahydrodipicolinate + NADH + H(+). It catalyses the reaction (S)-2,3,4,5-tetrahydrodipicolinate + NADP(+) + H2O = (2S,4S)-4-hydroxy-2,3,4,5-tetrahydrodipicolinate + NADPH + H(+). It functions in the pathway amino-acid biosynthesis; L-lysine biosynthesis via DAP pathway; (S)-tetrahydrodipicolinate from L-aspartate: step 4/4. Functionally, catalyzes the conversion of 4-hydroxy-tetrahydrodipicolinate (HTPA) to tetrahydrodipicolinate. The protein is 4-hydroxy-tetrahydrodipicolinate reductase of Rhodopseudomonas palustris (strain HaA2).